A 186-amino-acid chain; its full sequence is Large ribosomal subunit protein uL5 (186 aa).

Belongs to the universal ribosomal protein uL5 family. Part of the 50S ribosomal subunit; part of the 5S rRNA/L5/L18/L25 subcomplex. Contacts the 5S rRNA and the P site tRNA. Forms a bridge to the 30S subunit in the 70S ribosome.

This is one of the proteins that bind and probably mediate the attachment of the 5S RNA into the large ribosomal subunit, where it forms part of the central protuberance. In the 70S ribosome it contacts protein S13 of the 30S subunit (bridge B1b), connecting the 2 subunits; this bridge is implicated in subunit movement. Contacts the P site tRNA; the 5S rRNA and some of its associated proteins might help stabilize positioning of ribosome-bound tRNAs. This Karelsulcia muelleri (strain GWSS) (Sulcia muelleri) protein is Large ribosomal subunit protein uL5.